The chain runs to 298 residues: 4-nitrophenylphosphatase (298 aa).

As to quaternary structure, homodimer. Post-translationally, the N-terminus is blocked.

It carries out the reaction 4-nitrophenyl phosphate + H2O = 4-nitrophenol + phosphate + H(+). With respect to regulation, activity enhanced by Mg(2+) ion but inhibited by Zn(2+) ion. This Schizosaccharomyces pombe (strain 972 / ATCC 24843) (Fission yeast) protein is 4-nitrophenylphosphatase (pho2).